A 261-amino-acid polypeptide reads, in one-letter code: Triosephosphate isomerase (261 aa).

10-12 is a binding site for substrate; the sequence is NWK. His-100 functions as the Electrophile in the catalytic mechanism. Glu-172 functions as the Proton acceptor in the catalytic mechanism. Residues Gly-178, Ser-218, and 239 to 240 each bind substrate; that span reads GG.

It belongs to the triosephosphate isomerase family. Homodimer.

Its subcellular location is the cytoplasm. It carries out the reaction D-glyceraldehyde 3-phosphate = dihydroxyacetone phosphate. Its pathway is carbohydrate biosynthesis; gluconeogenesis. The protein operates within carbohydrate degradation; glycolysis; D-glyceraldehyde 3-phosphate from glycerone phosphate: step 1/1. Its function is as follows. Involved in the gluconeogenesis. Catalyzes stereospecifically the conversion of dihydroxyacetone phosphate (DHAP) to D-glyceraldehyde-3-phosphate (G3P). This chain is Triosephosphate isomerase, found in Rhodococcus jostii (strain RHA1).